The following is a 695-amino-acid chain: NADPH--cytochrome P450 reductase (695 aa).

The Lumenal portion of the chain corresponds to Met1 to Asp8. Residues Leu9 to Val31 form a helical membrane-spanning segment. The Cytoplasmic portion of the chain corresponds to Pro32 to Ser695. The Flavodoxin-like domain occupies Cys66–Trp221. FMN-binding positions include Ser72 to Ala77, Ala123 to Gly126, Leu169 to Gln178, and Asp204. The region spanning His277 to Pro538 is the FAD-binding FR-type domain. An NADP(+)-binding site is contributed by Arg296. FAD-binding positions include Arg451–Ser454, Thr469–Val471, and Gly486–Thr489. Residues Thr552, Ser614–Arg615, Lys620–Gln624, and Glu656 each bind NADP(+). Position 694 (Trp694) interacts with FAD.

It belongs to the NADPH--cytochrome P450 reductase family. The protein in the N-terminal section; belongs to the flavodoxin family. This sequence in the C-terminal section; belongs to the flavoprotein pyridine nucleotide cytochrome reductase family. It depends on FAD as a cofactor. Requires FMN as cofactor.

It localises to the endoplasmic reticulum membrane. Its subcellular location is the mitochondrion outer membrane. The protein resides in the cell membrane. It catalyses the reaction 2 oxidized [cytochrome P450] + NADPH = 2 reduced [cytochrome P450] + NADP(+) + H(+). In terms of biological role, this enzyme is required for electron transfer from NADP to cytochrome P450 in microsomes. It can also provide electron transfer to heme oxygenase and cytochrome B5. Involved in ergosterol biosynthesis. The protein is NADPH--cytochrome P450 reductase of Aspergillus terreus (strain NIH 2624 / FGSC A1156).